A 114-amino-acid polypeptide reads, in one-letter code: Late cornified envelope protein 1D (114 aa).

Low complexity predominate over residues 1–10 (MSCQQSQQQC). 2 disordered regions span residues 1–21 (MSCQQSQQQCQPPPKCTPKCT) and 75–114 (HHRRHRSHRRRPQSSDCCSQPSGGSSCCGGGSSQHSGGCC). Over residues 75-86 (HHRRHRSHRRRP) the composition is skewed to basic residues. A compositionally biased stretch (low complexity) spans 88-99 (SSDCCSQPSGGS).

Belongs to the LCE family. In terms of assembly, interacts with CYSRT1. Skin-specific. Expression was readily detected in adult trunk skin, adult arm skin, fetal skin, penal skin, vulva, esophagus and tongue. Not expressed in the cervix, rectum, lung, colon, or placenta.

Precursors of the cornified envelope of the stratum corneum. In Homo sapiens (Human), this protein is Late cornified envelope protein 1D (LCE1D).